The chain runs to 31 residues: Photosystem II reaction center protein T (31 aa).

The helical transmembrane segment at 3 to 23 threads the bilayer; the sequence is ALVYTFLLVGTLGIIFFAIFF.

The protein belongs to the PsbT family. In terms of assembly, PSII is composed of 1 copy each of membrane proteins PsbA, PsbB, PsbC, PsbD, PsbE, PsbF, PsbH, PsbI, PsbJ, PsbK, PsbL, PsbM, PsbT, PsbY, PsbZ, Psb30/Ycf12, at least 3 peripheral proteins of the oxygen-evolving complex and a large number of cofactors. It forms dimeric complexes.

It is found in the plastid. Its subcellular location is the chloroplast thylakoid membrane. Functionally, found at the monomer-monomer interface of the photosystem II (PS II) dimer, plays a role in assembly and dimerization of PSII. PSII is a light-driven water plastoquinone oxidoreductase, using light energy to abstract electrons from H(2)O, generating a proton gradient subsequently used for ATP formation. The chain is Photosystem II reaction center protein T from Mesostigma viride (Green alga).